The primary structure comprises 181 residues: Probable cobalt-precorrin-6B C(15)-methyltransferase (decarboxylating) (181 aa).

S-adenosyl-L-methionine is bound by residues Thr16, 40-44 (GCGSG), Asp61, and Ala89.

This sequence belongs to the methyltransferase superfamily. Archaeal-type CbiT family.

It catalyses the reaction Co-precorrin-6B + S-adenosyl-L-methionine = Co-precorrin-7 + S-adenosyl-L-homocysteine + CO2. The protein operates within cofactor biosynthesis; adenosylcobalamin biosynthesis; cob(II)yrinate a,c-diamide from sirohydrochlorin (anaerobic route): step 8/10. Functionally, catalyzes the methylation of C-15 in cobalt-precorrin-6B followed by the decarboxylation of C-12 to form cobalt-precorrin-7. This chain is Probable cobalt-precorrin-6B C(15)-methyltransferase (decarboxylating), found in Methanococcus maripaludis (strain DSM 14266 / JCM 13030 / NBRC 101832 / S2 / LL).